The chain runs to 316 residues: Cell surface superoxide dismutase [Cu-Zn] 6 (316 aa).

Positions 1–18 (MIFIPIIILIYLVSIAAS) are cleaved as a signal peptide. Residues H78, H80, and H96 each coordinate Cu cation. Residues H96 and D119 each contribute to the Zn(2+) site. N-linked (GlcNAc...) asparagine glycosylation occurs at N128. Cu cation is bound at residue H159. N-linked (GlcNAc...) asparagine glycans are attached at residues N162 and N240. The disordered stretch occupies residues 243–263 (DNVYSPEETRPSDQNKKSHRH). Residues 249-258 (EETRPSDQNK) show a composition bias toward basic and acidic residues. N-linked (GlcNAc...) asparagine glycans are attached at residues N278 and N281. S288 carries GPI-anchor amidated serine lipidation. Positions 289–316 (SDCLNDGMMVTGSVFGSLVLGIAAGIFV) are cleaved as a propeptide — removed in mature form.

It belongs to the Cu-Zn superoxide dismutase family. It depends on Cu cation as a cofactor. Zn(2+) is required as a cofactor. The GPI-anchor is attached to the protein in the endoplasmic reticulum and serves to target the protein to the cell surface. There, the glucosamine-inositol phospholipid moiety is cleaved off and the GPI-modified mannoprotein is covalently attached via its lipidless GPI glycan remnant to the 1,6-beta-glucan of the outer cell wall layer.

It is found in the secreted. The protein resides in the cell wall. It localises to the membrane. The catalysed reaction is 2 superoxide + 2 H(+) = H2O2 + O2. Its function is as follows. Superoxide dismutases serve to convert damaging superoxide radicals, a key form of ROS, to less damaging hydrogen peroxide that can be converted into water by catalase action. May be involved protection against extracellular stress. The sequence is that of Cell surface superoxide dismutase [Cu-Zn] 6 (SOD6) from Candida albicans (strain SC5314 / ATCC MYA-2876) (Yeast).